Reading from the N-terminus, the 1324-residue chain is DNA-directed RNA polymerase subunit beta' (1324 aa).

The Zn(2+) site is built by Cys219, Cys292, Cys299, and Cys302. Residues 1293-1324 form a disordered region; that stretch reads ARDFEFASSDVEEDELTEEDDDYGDEEEEDAF. Residues 1302–1324 are compositionally biased toward acidic residues; that stretch reads DVEEDELTEEDDDYGDEEEEDAF.

This sequence belongs to the RNA polymerase beta' chain family. RpoC2 subfamily. In terms of assembly, in cyanobacteria the RNAP catalytic core is composed of 2 alpha, 1 beta, 1 beta', 1 gamma and 1 omega subunit. When a sigma factor is associated with the core the holoenzyme is formed, which can initiate transcription. Zn(2+) serves as cofactor.

It catalyses the reaction RNA(n) + a ribonucleoside 5'-triphosphate = RNA(n+1) + diphosphate. DNA-dependent RNA polymerase catalyzes the transcription of DNA into RNA using the four ribonucleoside triphosphates as substrates. This is DNA-directed RNA polymerase subunit beta' from Thermosynechococcus vestitus (strain NIES-2133 / IAM M-273 / BP-1).